The chain runs to 252 residues: ATP synthase subunit a (252 aa).

A run of 6 helical transmembrane segments spans residues 29-49 (FTNVSLFTVVTVVITAAFLFI), 87-107 (FFPLVFSLFTFILVANFIGLF), 117-137 (IMITFSLAMVVILTVIGYGFY), 146-166 (LFVPSGVPVVVLPLVTMIEII), 196-216 (FIVSMIGVGIVGVGGAVLPLI), and 219-239 (VAITALEFLVAFLQAYVFTVL).

Belongs to the ATPase A chain family. F-type ATPases have 2 components, CF(1) - the catalytic core - and CF(0) - the membrane proton channel. CF(1) has five subunits: alpha(3), beta(3), gamma(1), delta(1), epsilon(1). CF(0) has three main subunits: a(1), b(2) and c(9-12). The alpha and beta chains form an alternating ring which encloses part of the gamma chain. CF(1) is attached to CF(0) by a central stalk formed by the gamma and epsilon chains, while a peripheral stalk is formed by the delta and b chains.

Its subcellular location is the cell inner membrane. In terms of biological role, key component of the proton channel; it plays a direct role in the translocation of protons across the membrane. The protein is ATP synthase subunit a of Bartonella tribocorum (strain CIP 105476 / IBS 506).